We begin with the raw amino-acid sequence, 252 residues long: 3-dehydroquinate dehydratase (252 aa).

3-dehydroquinate contacts are provided by residues 46-48 (EWR) and Arg-82. The active-site Proton donor/acceptor is His-143. Lys-170 functions as the Schiff-base intermediate with substrate in the catalytic mechanism. Positions 212, 231, and 235 each coordinate 3-dehydroquinate.

This sequence belongs to the type-I 3-dehydroquinase family. Homodimer.

The enzyme catalyses 3-dehydroquinate = 3-dehydroshikimate + H2O. It functions in the pathway metabolic intermediate biosynthesis; chorismate biosynthesis; chorismate from D-erythrose 4-phosphate and phosphoenolpyruvate: step 3/7. Its function is as follows. Involved in the third step of the chorismate pathway, which leads to the biosynthesis of aromatic amino acids. Catalyzes the cis-dehydration of 3-dehydroquinate (DHQ) and introduces the first double bond of the aromatic ring to yield 3-dehydroshikimate. The protein is 3-dehydroquinate dehydratase of Listeria monocytogenes serotype 4b (strain F2365).